The chain runs to 509 residues: ATP synthase subunit alpha (509 aa).

Position 169-176 (169-176) interacts with ATP; the sequence is GDRQTGKT.

It belongs to the ATPase alpha/beta chains family. In terms of assembly, F-type ATPases have 2 components, CF(1) - the catalytic core - and CF(0) - the membrane proton channel. CF(1) has five subunits: alpha(3), beta(3), gamma(1), delta(1), epsilon(1). CF(0) has three main subunits: a(1), b(2) and c(9-12). The alpha and beta chains form an alternating ring which encloses part of the gamma chain. CF(1) is attached to CF(0) by a central stalk formed by the gamma and epsilon chains, while a peripheral stalk is formed by the delta and b chains.

It is found in the cell inner membrane. The catalysed reaction is ATP + H2O + 4 H(+)(in) = ADP + phosphate + 5 H(+)(out). Produces ATP from ADP in the presence of a proton gradient across the membrane. The alpha chain is a regulatory subunit. The polypeptide is ATP synthase subunit alpha (Paramagnetospirillum magneticum (strain ATCC 700264 / AMB-1) (Magnetospirillum magneticum)).